A 376-amino-acid polypeptide reads, in one-letter code: CC-adding tRNA nucleotidyltransferase (376 aa).

Glycine 26 to arginine 29 contributes to the CTP binding site. Residues aspartate 39 and aspartate 41 each contribute to the Mg(2+) site. CTP-binding positions include arginine 94–aspartate 95, asparagine 99, aspartate 136–arginine 145, and arginine 176.

Belongs to the tRNA nucleotidyltransferase/poly(A) polymerase family. It depends on Mg(2+) as a cofactor.

The enzyme catalyses a tRNA precursor + 2 CTP = a tRNA with a 3' CC end + 2 diphosphate. In terms of biological role, tRNA nucleotidyltransferase involved in the synthesis of the tRNA CCA terminus. Adds the two cytidine residues to tRNA. The sequence is that of CC-adding tRNA nucleotidyltransferase from Shouchella clausii (strain KSM-K16) (Alkalihalobacillus clausii).